The chain runs to 214 residues: Small ribosomal subunit protein uS2 (214 aa).

This sequence belongs to the universal ribosomal protein uS2 family.

This chain is Small ribosomal subunit protein uS2, found in Methanococcoides burtonii (strain DSM 6242 / NBRC 107633 / OCM 468 / ACE-M).